The sequence spans 128 residues: MIFKFFEAIGKRKCSIAKISLFSTVKYNCGVININGKHAYEYLQKNCNPFDFLKIKNYNVCIYVKGGGLIGQAEAIKLAISRALKSFLRKKKIKKLKDFGFLTRNSSCKERRKYGLKKARKAPQYSKR.

It belongs to the universal ribosomal protein uS9 family.

It localises to the plastid. This is Small ribosomal subunit protein uS9c (rps9) from Euglena longa (Euglenophycean alga).